A 97-amino-acid polypeptide reads, in one-letter code: Co-chaperonin GroES (97 aa).

The protein belongs to the GroES chaperonin family. Heptamer of 7 subunits arranged in a ring. Interacts with the chaperonin GroEL.

The protein resides in the cytoplasm. Its function is as follows. Together with the chaperonin GroEL, plays an essential role in assisting protein folding. The GroEL-GroES system forms a nano-cage that allows encapsulation of the non-native substrate proteins and provides a physical environment optimized to promote and accelerate protein folding. GroES binds to the apical surface of the GroEL ring, thereby capping the opening of the GroEL channel. In Pseudomonas fluorescens (strain ATCC BAA-477 / NRRL B-23932 / Pf-5), this protein is Co-chaperonin GroES.